The following is a 163-amino-acid chain: Protein VASCULATURE COMPLEXITY AND CONNECTIVITY (163 aa).

The signal sequence occupies residues 1–27; it reads MTKIGGILVCLVIVGLDVAAAILGIQA. Transmembrane regions (helical) follow at residues 54–74, 95–115, and 133–153; these read LGLG…LVGG, MACL…IVIG, and FLSI…AYYV.

The protein belongs to the DESIGUAL family. Interacts with OPS. In terms of tissue distribution, expressed in vascular cells, mostly in hypocotyls, and, to a lower extent, in seedlings, roots, flowers, siliques, developing leaves and inflorescences, but barely in mature leaves and seeds. High levels in leaf primordia.

The protein resides in the endoplasmic reticulum membrane. In terms of biological role, required, together with OPS, for embryo provasculature development and cotyledon vascular complexity and connectivity. Necessary, partially redundantly with DEAL2 and DEAL3, to ensure bilateral symmetry development and early leaf margin patterning, probably via the regulation of auxin and CUC2 distribution. Regulates cell proliferation but not cell expansion. The sequence is that of Protein VASCULATURE COMPLEXITY AND CONNECTIVITY from Arabidopsis thaliana (Mouse-ear cress).